A 439-amino-acid polypeptide reads, in one-letter code: Methylenetetrahydrofolate--tRNA-(uracil-5-)-methyltransferase TrmFO (439 aa).

An FAD-binding site is contributed by 8–13 (GAGLAG).

Belongs to the MnmG family. TrmFO subfamily. It depends on FAD as a cofactor.

The protein resides in the cytoplasm. The enzyme catalyses uridine(54) in tRNA + (6R)-5,10-methylene-5,6,7,8-tetrahydrofolate + NADH + H(+) = 5-methyluridine(54) in tRNA + (6S)-5,6,7,8-tetrahydrofolate + NAD(+). It catalyses the reaction uridine(54) in tRNA + (6R)-5,10-methylene-5,6,7,8-tetrahydrofolate + NADPH + H(+) = 5-methyluridine(54) in tRNA + (6S)-5,6,7,8-tetrahydrofolate + NADP(+). Functionally, catalyzes the folate-dependent formation of 5-methyl-uridine at position 54 (M-5-U54) in all tRNAs. The chain is Methylenetetrahydrofolate--tRNA-(uracil-5-)-methyltransferase TrmFO from Lacticaseibacillus paracasei (strain ATCC 334 / BCRC 17002 / CCUG 31169 / CIP 107868 / KCTC 3260 / NRRL B-441) (Lactobacillus paracasei).